The following is a 69-amino-acid chain: Cytochrome c oxidase subunit 8A, mitochondrial (69 aa).

The transit peptide at 1–25 directs the protein to the mitochondrion; sequence MSVLTPLLLRGLTGSARRLPVPRAQ. An SIFI-degron motif is present at residues 2–19; the sequence is SVLTPLLLRGLTGSARRL. The Mitochondrial matrix segment spans residues 26–36; sequence VHSMPPEQKLG. The chain crosses the membrane as a helical span at residues 37 to 60; that stretch reads VLELAIGFTSCLVTFLLPAGWILS. At 61–69 the chain is on the mitochondrial intermembrane side; that stretch reads HLDSYKKRG.

Belongs to the cytochrome c oxidase VIII family. In terms of assembly, component of the cytochrome c oxidase (complex IV, CIV), a multisubunit enzyme composed of 14 subunits. The complex is composed of a catalytic core of 3 subunits MT-CO1, MT-CO2 and MT-CO3, encoded in the mitochondrial DNA, and 11 supernumerary subunits COX4I, COX5A, COX5B, COX6A, COX6B, COX6C, COX7A, COX7B, COX7C, COX8 and NDUFA4, which are encoded in the nuclear genome. The complex exists as a monomer or a dimer and forms supercomplexes (SCs) in the inner mitochondrial membrane with NADH-ubiquinone oxidoreductase (complex I, CI) and ubiquinol-cytochrome c oxidoreductase (cytochrome b-c1 complex, complex III, CIII), resulting in different assemblies (supercomplex SCI(1)III(2)IV(1) and megacomplex MCI(2)III(2)IV(2)). In terms of processing, in response to mitochondrial stress, the precursor protein is ubiquitinated by the SIFI complex in the cytoplasm before mitochondrial import, leading to its degradation. Within the SIFI complex, UBR4 initiates ubiquitin chain that are further elongated or branched by KCMF1.

Its subcellular location is the mitochondrion inner membrane. Its pathway is energy metabolism; oxidative phosphorylation. Component of the cytochrome c oxidase, the last enzyme in the mitochondrial electron transport chain which drives oxidative phosphorylation. The respiratory chain contains 3 multisubunit complexes succinate dehydrogenase (complex II, CII), ubiquinol-cytochrome c oxidoreductase (cytochrome b-c1 complex, complex III, CIII) and cytochrome c oxidase (complex IV, CIV), that cooperate to transfer electrons derived from NADH and succinate to molecular oxygen, creating an electrochemical gradient over the inner membrane that drives transmembrane transport and the ATP synthase. Cytochrome c oxidase is the component of the respiratory chain that catalyzes the reduction of oxygen to water. Electrons originating from reduced cytochrome c in the intermembrane space (IMS) are transferred via the dinuclear copper A center (CU(A)) of subunit 2 and heme A of subunit 1 to the active site in subunit 1, a binuclear center (BNC) formed by heme A3 and copper B (CU(B)). The BNC reduces molecular oxygen to 2 water molecules using 4 electrons from cytochrome c in the IMS and 4 protons from the mitochondrial matrix. This Saimiri sciureus (Common squirrel monkey) protein is Cytochrome c oxidase subunit 8A, mitochondrial (COX8A).